The following is a 164-amino-acid chain: UPF0178 protein RPD_2254 (164 aa).

It belongs to the UPF0178 family.

The sequence is that of UPF0178 protein RPD_2254 from Rhodopseudomonas palustris (strain BisB5).